The following is a 58-amino-acid chain: PI-actitoxin-Axm2a (58 aa).

The 51-residue stretch at 7 to 57 (CLLPKKVGPCRAAVPRFYYNSDSGKCEGFTYGGCHANANNFKTKDECKNAC) folds into the BPTI/Kunitz inhibitor domain. Cystine bridges form between Cys7-Cys57, Cys16-Cys40, and Cys32-Cys53.

This sequence belongs to the venom Kunitz-type family. Sea anemone type 2 potassium channel toxin subfamily. Expressed by acrorhagi.

It is found in the secreted. It localises to the nematocyst. Serine protease inhibitor that is strongly active against trypsin (1900 IU/mg) and moderately active against plasmin. Also shows weak inhibition against chymotrypsin (70%), elastase (38%) and the metalloprotease thermolysin (14%). The chain is PI-actitoxin-Axm2a from Anthopleura aff. xanthogrammica (Sea anemone).